We begin with the raw amino-acid sequence, 328 residues long: GTP 3',8-cyclase (328 aa).

The Radical SAM core domain occupies 1–229 (MNQVDYLRIS…DAQVRGAGPA (229 aa)). R8 contributes to the GTP binding site. [4Fe-4S] cluster-binding residues include C15 and C19. Y21 is an S-adenosyl-L-methionine binding site. Residue C22 coordinates [4Fe-4S] cluster. GTP is bound at residue R60. G64 provides a ligand contact to S-adenosyl-L-methionine. T91 is a binding site for GTP. S115 is an S-adenosyl-L-methionine binding site. K155 is a GTP binding site. M189 lines the S-adenosyl-L-methionine pocket. C252 and C255 together coordinate [4Fe-4S] cluster. 257 to 259 (RMR) is a binding site for GTP. C269 serves as a coordination point for [4Fe-4S] cluster.

The protein belongs to the radical SAM superfamily. MoaA family. In terms of assembly, monomer and homodimer. The cofactor is [4Fe-4S] cluster.

The catalysed reaction is GTP + AH2 + S-adenosyl-L-methionine = (8S)-3',8-cyclo-7,8-dihydroguanosine 5'-triphosphate + 5'-deoxyadenosine + L-methionine + A + H(+). The protein operates within cofactor biosynthesis; molybdopterin biosynthesis. In terms of biological role, catalyzes the cyclization of GTP to (8S)-3',8-cyclo-7,8-dihydroguanosine 5'-triphosphate. The sequence is that of GTP 3',8-cyclase from Nostoc sp. (strain PCC 7120 / SAG 25.82 / UTEX 2576).